Here is a 197-residue protein sequence, read N- to C-terminus: Holliday junction branch migration complex subunit RuvA (197 aa).

The tract at residues 1-62 (MIEFVRGEVA…EDQEVLFGFR (62 aa)) is domain I. The tract at residues 63–141 (SRRERALFTK…ELAPDYIPSE (79 aa)) is domain II. The segment at 141–145 (EGLFA) is flexible linker. Positions 146-197 (QGNAELNEACEALTALGYSEREVEKVKKALQGEVLSTDQYVKRALQLLLNVR) are domain III.

This sequence belongs to the RuvA family. Homotetramer. Forms an RuvA(8)-RuvB(12)-Holliday junction (HJ) complex. HJ DNA is sandwiched between 2 RuvA tetramers; dsDNA enters through RuvA and exits via RuvB. An RuvB hexamer assembles on each DNA strand where it exits the tetramer. Each RuvB hexamer is contacted by two RuvA subunits (via domain III) on 2 adjacent RuvB subunits; this complex drives branch migration. In the full resolvosome a probable DNA-RuvA(4)-RuvB(12)-RuvC(2) complex forms which resolves the HJ.

Its subcellular location is the cytoplasm. In terms of biological role, the RuvA-RuvB-RuvC complex processes Holliday junction (HJ) DNA during genetic recombination and DNA repair, while the RuvA-RuvB complex plays an important role in the rescue of blocked DNA replication forks via replication fork reversal (RFR). RuvA specifically binds to HJ cruciform DNA, conferring on it an open structure. The RuvB hexamer acts as an ATP-dependent pump, pulling dsDNA into and through the RuvAB complex. HJ branch migration allows RuvC to scan DNA until it finds its consensus sequence, where it cleaves and resolves the cruciform DNA. In Exiguobacterium sibiricum (strain DSM 17290 / CCUG 55495 / CIP 109462 / JCM 13490 / 255-15), this protein is Holliday junction branch migration complex subunit RuvA.